The chain runs to 465 residues: GTPase Der (465 aa).

EngA-type G domains are found at residues 3 to 167 and 179 to 352; these read PLVA…PERG and IHIA…VSAL. GTP-binding positions include 9–16, 57–61, 119–122, 185–192, 232–236, and 297–300; these read GRPNVGKS, DTGGM, NKID, DTAGL, and NKWD. In terms of domain architecture, KH-like spans 353-437; it reads RQFSTSEVNK…PVRFLFREGD (85 aa).

The protein belongs to the TRAFAC class TrmE-Era-EngA-EngB-Septin-like GTPase superfamily. EngA (Der) GTPase family. Associates with the 50S ribosomal subunit.

GTPase that plays an essential role in the late steps of ribosome biogenesis. In Xylella fastidiosa (strain 9a5c), this protein is GTPase Der.